We begin with the raw amino-acid sequence, 374 residues long: Glutamate 5-kinase (374 aa).

Lysine 13 is an ATP binding site. The substrate site is built by serine 54, aspartate 141, and asparagine 153. Residue 173-174 (SD) coordinates ATP. Positions 278-355 (KGTVHLDSGA…NEIESVLGYP (78 aa)) constitute a PUA domain.

This sequence belongs to the glutamate 5-kinase family.

The protein resides in the cytoplasm. It carries out the reaction L-glutamate + ATP = L-glutamyl 5-phosphate + ADP. The protein operates within amino-acid biosynthesis; L-proline biosynthesis; L-glutamate 5-semialdehyde from L-glutamate: step 1/2. Functionally, catalyzes the transfer of a phosphate group to glutamate to form L-glutamate 5-phosphate. The polypeptide is Glutamate 5-kinase (Roseobacter denitrificans (strain ATCC 33942 / OCh 114) (Erythrobacter sp. (strain OCh 114))).